A 576-amino-acid chain; its full sequence is Putative export ATP-binding/permease protein RT0691 (576 aa).

Positions 20–303 (LIIVMISLLS…IFELLSEIHL (284 aa)) constitute an ABC transmembrane type-1 domain. Transmembrane regions (helical) follow at residues 21 to 41 (IIVM…GSVF), 61 to 81 (ILYI…RSYF), 135 to 155 (FLSF…LMFF), 158 to 178 (FKLA…LIKF), 242 to 262 (ALFF…IVWI), and 277 to 297 (IISF…IFEL). An ABC transporter domain is found at 336–572 (IEFKNVDFTY…SEIYRNICRE (237 aa)). Residue 371 to 378 (GRSGAGKS) participates in ATP binding.

The protein belongs to the ABC transporter superfamily. As to quaternary structure, homodimer.

The protein localises to the cell inner membrane. Its function is as follows. Part of an ABC transporter complex. Transmembrane domains (TMD) form a pore in the inner membrane and the ATP-binding domain (NBD) is responsible for energy generation. This Rickettsia typhi (strain ATCC VR-144 / Wilmington) protein is Putative export ATP-binding/permease protein RT0691.